We begin with the raw amino-acid sequence, 255 residues long: Tabinhibitin 2 (255 aa).

Positions 1 to 23 (MISILVSRFLLAALVLQYATIDA) are cleaved as a signal peptide. Positions 32–34 (RGD) match the Cell attachment site motif. Residues 67 to 211 (LSKINDVRDH…KARALLTCNF (145 aa)) form the SCP domain.

It belongs to the CRISP family. Expressed in salivary glands.

The protein localises to the secreted. Inhibits platelet aggregation induced by all agonists tested (ADP, arachidonic acid, the thromboxane A2 analog U46619, thrombin, and snake venom snaclecs (TMVA that activates platelet through GPIB, and stejnulxin that specifically acts through GPVI (GP6))). May act by competing with fibrinogen for binding to glycoprotein IIb/IIIa (ITGA2B/ITGB3). In Tabanus yao (Horsefly), this protein is Tabinhibitin 2.